We begin with the raw amino-acid sequence, 291 residues long: Presqualene diphosphate synthase (291 aa).

The interval 1-23 (MTSAMKKIQPEAFSEKSSDSQAS) is disordered.

The protein belongs to the phytoene/squalene synthase family. HpnD subfamily.

The enzyme catalyses 2 (2E,6E)-farnesyl diphosphate = presqualene diphosphate + diphosphate. It participates in secondary metabolite biosynthesis; hopanoid biosynthesis. Functionally, involved in the biosynthesis of the hopanoid precursor squalene (SQ) from farnesyl diphosphate (FPP). Catalyzes the first step, the formation of presqualene diphosphate (PSPP) from two molecules of FPP. The chain is Presqualene diphosphate synthase from Zymomonas mobilis subsp. mobilis (strain ATCC 31821 / ZM4 / CP4).